The following is a 148-amino-acid chain: FAD synthase (148 aa).

Residues 14–15, 19–22, and Asp97 contribute to the ATP site; these read TF and HPGH.

It belongs to the archaeal FAD synthase family. Homodimer. Requires a divalent metal cation as cofactor.

It catalyses the reaction FMN + ATP + H(+) = FAD + diphosphate. Its pathway is cofactor biosynthesis; FAD biosynthesis; FAD from FMN: step 1/1. Catalyzes the transfer of the AMP portion of ATP to flavin mononucleotide (FMN) to produce flavin adenine dinucleotide (FAD) coenzyme. The protein is FAD synthase of Natrialba magadii (strain ATCC 43099 / DSM 3394 / CCM 3739 / CIP 104546 / IAM 13178 / JCM 8861 / NBRC 102185 / NCIMB 2190 / MS3) (Natronobacterium magadii).